We begin with the raw amino-acid sequence, 340 residues long: Ferrochelatase (340 aa).

The Fe cation site is built by histidine 189 and glutamate 292.

The protein belongs to the ferrochelatase family.

The protein resides in the cytoplasm. The catalysed reaction is heme b + 2 H(+) = protoporphyrin IX + Fe(2+). It functions in the pathway porphyrin-containing compound metabolism; protoheme biosynthesis; protoheme from protoporphyrin-IX: step 1/1. Catalyzes the ferrous insertion into protoporphyrin IX. This chain is Ferrochelatase, found in Pseudomonas paraeruginosa (strain DSM 24068 / PA7) (Pseudomonas aeruginosa (strain PA7)).